The following is a 273-amino-acid chain: Putative cysteine-rich repeat secretory protein 40 (273 aa).

The signal sequence occupies residues 1–32; the sequence is MYPSCSLLQRLVWFPFLALVATQLLFIRNVSS. Gnk2-homologous domains are found at residues 39 to 141 and 151 to 264; these read YLHH…SISV and YENN…LYPF.

This sequence belongs to the cysteine-rich repeat secretory protein family.

Its subcellular location is the secreted. This is Putative cysteine-rich repeat secretory protein 40 (CRRSP40) from Arabidopsis thaliana (Mouse-ear cress).